The chain runs to 224 residues: Tumor protein D52 (224 aa).

The segment at 29 to 53 is disordered; the sequence is LSPSGNTSPPGSPTQNVGLLKTEPV. T35 is subject to Phosphothreonine. Phosphoserine is present on residues S36 and S40. Residues 61 to 113 adopt a coiled-coil conformation; it reads VTMLSAPEALTEEEQEELRRELTKVEEEIQTLSQVLAAKEKHLAELKRKLGIS. Residues T138, S175, and S223 each carry the phosphoserine modification. A disordered region spans residues 186–224; it reads KVGGAKPAGGDFGEVLNSTANATSTMTTEPPPEQMTESP. A compositionally biased stretch (low complexity) spans 202-224; sequence NSTANATSTMTTEPPPEQMTESP.

This sequence belongs to the TPD52 family. Forms a homodimer or heterodimer with other members of the family. In terms of tissue distribution, isoform 2 is expressed at higher levels in kidney and brain than in liver, lung, testis and heart. Within the brain, isoform 2 is highly expressed in the granular layer of the cerebellum, the cortex and the hippocampus. In embryos, isoform 2 is expressed in the epithelium of the developing intestine, stomach, olfactory epithelium, neuronal layers of the retina, salivary gland, kidney and dorsal root ganglion.

This is Tumor protein D52 (Tpd52) from Mus musculus (Mouse).